A 280-amino-acid chain; its full sequence is Large ribosomal subunit protein uL2 (280 aa).

Disordered stretches follow at residues 1–59 (MAIR…GGHK) and 223–280 (GVVM…NKKR). Residues 23-33 (ELTRSTPEKSL) show a composition bias toward basic and acidic residues. 2 stretches are compositionally biased toward basic residues: residues 36–59 (PLHK…GGHK) and 269–280 (VRRRRSNKNKKR).

The protein belongs to the universal ribosomal protein uL2 family. Part of the 50S ribosomal subunit. Forms a bridge to the 30S subunit in the 70S ribosome.

In terms of biological role, one of the primary rRNA binding proteins. Required for association of the 30S and 50S subunits to form the 70S ribosome, for tRNA binding and peptide bond formation. It has been suggested to have peptidyltransferase activity; this is somewhat controversial. Makes several contacts with the 16S rRNA in the 70S ribosome. This is Large ribosomal subunit protein uL2 from Corynebacterium kroppenstedtii (strain DSM 44385 / JCM 11950 / CIP 105744 / CCUG 35717).